The chain runs to 675 residues: DNA ligase 1 (675 aa).

NAD(+) is bound by residues 34–38 (DFEYD), 83–84 (SL), and Glu114. Lys116 serves as the catalytic N6-AMP-lysine intermediate. Arg137, Glu177, Lys295, and Lys319 together coordinate NAD(+). Zn(2+)-binding residues include Cys413, Cys416, Cys431, and Cys436. The 80-residue stretch at 596–675 (NSGSALAGKT…AEFLRLLSGG (80 aa)) folds into the BRCT domain.

The protein belongs to the NAD-dependent DNA ligase family. LigA subfamily. Mg(2+) serves as cofactor. It depends on Mn(2+) as a cofactor.

It carries out the reaction NAD(+) + (deoxyribonucleotide)n-3'-hydroxyl + 5'-phospho-(deoxyribonucleotide)m = (deoxyribonucleotide)n+m + AMP + beta-nicotinamide D-nucleotide.. DNA ligase that catalyzes the formation of phosphodiester linkages between 5'-phosphoryl and 3'-hydroxyl groups in double-stranded DNA using NAD as a coenzyme and as the energy source for the reaction. It is essential for DNA replication and repair of damaged DNA. This chain is DNA ligase 1, found in Opitutus terrae (strain DSM 11246 / JCM 15787 / PB90-1).